The primary structure comprises 147 residues: Large ribosomal subunit protein uL16 (147 aa).

Belongs to the universal ribosomal protein uL16 family. Part of the 50S ribosomal subunit.

Its function is as follows. Binds 23S rRNA and is also seen to make contacts with the A and possibly P site tRNAs. The polypeptide is Large ribosomal subunit protein uL16 (Clostridium acetobutylicum (strain ATCC 824 / DSM 792 / JCM 1419 / IAM 19013 / LMG 5710 / NBRC 13948 / NRRL B-527 / VKM B-1787 / 2291 / W)).